The sequence spans 199 residues: Protein C (199 aa).

Polar residues-rich tracts occupy residues 19-34 (QLIS…SYSA) and 43-57 (KTTQ…SAPP). Residues 19 to 67 (QLISPRPSTSLNSYSAPTPKKTYRKTTQSTQEPSNSAPPSVNQKSNQQK) are disordered. Residues 58 to 67 (SVNQKSNQQK) are compositionally biased toward low complexity.

The protein belongs to the respirovirus protein C family.

This chain is Protein C (P/V/C), found in Human parainfluenza 3 virus (strain Wash/47885/57) (HPIV-3).